The chain runs to 190 residues: Peptide methionine sulfoxide reductase A2-2 (190 aa).

Positions 1-20 (MSNDTGADGGAANPDLGPDA) are disordered. Residues 10–20 (GAANPDLGPDA) are compositionally biased toward low complexity.

It belongs to the MsrA Met sulfoxide reductase family.

Its subcellular location is the cytoplasm. It is found in the cytosol. It carries out the reaction L-methionyl-[protein] + [thioredoxin]-disulfide + H2O = L-methionyl-(S)-S-oxide-[protein] + [thioredoxin]-dithiol. The catalysed reaction is [thioredoxin]-disulfide + L-methionine + H2O = L-methionine (S)-S-oxide + [thioredoxin]-dithiol. Functionally, catalyzes the reduction of methionine sulfoxide (MetSO) to methionine in proteins. Plays a protective role against oxidative stress by restoring activity to proteins that have been inactivated by methionine oxidation. MSRA family specifically reduces the MetSO S-enantiomer. In Oryza sativa subsp. japonica (Rice), this protein is Peptide methionine sulfoxide reductase A2-2 (MSRA2-2).